Consider the following 61-residue polypeptide: Small ribosomal subunit protein uS14 (61 aa).

Zn(2+) is bound by residues Cys24, Cys27, Cys40, and Cys43.

The protein belongs to the universal ribosomal protein uS14 family. Zinc-binding uS14 subfamily. In terms of assembly, part of the 30S ribosomal subunit. Contacts proteins S3 and S10. Zn(2+) serves as cofactor.

Functionally, binds 16S rRNA, required for the assembly of 30S particles and may also be responsible for determining the conformation of the 16S rRNA at the A site. This Mycobacterium leprae (strain Br4923) protein is Small ribosomal subunit protein uS14.